The following is a 168-amino-acid chain: Luminal-binding protein 3 (168 aa).

A glycan (N-linked (GlcNAc...) asparagine) is linked at N120. The segment at 148 to 168 (QRSGGASGGSSSSEEDGHDEL) is disordered. A Prevents secretion from ER motif is present at residues 165–168 (HDEL).

It belongs to the heat shock protein 70 family.

The protein localises to the endoplasmic reticulum lumen. Functionally, probably plays a role in facilitating the assembly of multimeric protein complexes inside the ER. In Nicotiana tabacum (Common tobacco), this protein is Luminal-binding protein 3 (BIP3).